The primary structure comprises 195 residues: Flavin prenyltransferase UbiX (195 aa).

FMN is bound by residues 17–19, S43, 94–97, and R129; these read GGS and SAGT. Residues Y159 and R175 each contribute to the dimethylallyl phosphate site.

This sequence belongs to the UbiX/PAD1 family.

It catalyses the reaction dimethylallyl phosphate + FMNH2 = prenylated FMNH2 + phosphate. Its function is as follows. Flavin prenyltransferase that catalyzes the synthesis of the prenylated FMN cofactor (prenyl-FMN) for 4-hydroxy-3-polyprenylbenzoic acid decarboxylase UbiD. The prenyltransferase is metal-independent and links a dimethylallyl moiety from dimethylallyl monophosphate (DMAP) to the flavin N5 and C6 atoms of FMN. The polypeptide is Flavin prenyltransferase UbiX (Deinococcus radiodurans (strain ATCC 13939 / DSM 20539 / JCM 16871 / CCUG 27074 / LMG 4051 / NBRC 15346 / NCIMB 9279 / VKM B-1422 / R1)).